Here is a 717-residue protein sequence, read N- to C-terminus: uncharacterized protein (717 aa).

This sequence belongs to the asfivirus C717R family.

The protein resides in the virion. This is an uncharacterized protein from African swine fever virus (strain Badajoz 1971 Vero-adapted) (Ba71V).